We begin with the raw amino-acid sequence, 166 residues long: Co-chaperone protein HscB homolog (166 aa).

Residues 3–75 (QYFTLFRIEP…IDRAAYLLKT (73 aa)) enclose the J domain.

Belongs to the HscB family. Interacts with HscA and stimulates its ATPase activity.

In terms of biological role, co-chaperone involved in the maturation of iron-sulfur cluster-containing proteins. Seems to help targeting proteins to be folded toward HscA. This chain is Co-chaperone protein HscB homolog, found in Neisseria meningitidis serogroup C (strain 053442).